Here is a 507-residue protein sequence, read N- to C-terminus: ATP synthase subunit alpha, chloroplastic (507 aa).

170–177 provides a ligand contact to ATP; it reads GDRQTGKT.

Belongs to the ATPase alpha/beta chains family. In terms of assembly, F-type ATPases have 2 components, CF(1) - the catalytic core - and CF(0) - the membrane proton channel. CF(1) has five subunits: alpha(3), beta(3), gamma(1), delta(1), epsilon(1). CF(0) has four main subunits: a, b, b' and c.

Its subcellular location is the plastid. The protein resides in the chloroplast thylakoid membrane. The enzyme catalyses ATP + H2O + 4 H(+)(in) = ADP + phosphate + 5 H(+)(out). In terms of biological role, produces ATP from ADP in the presence of a proton gradient across the membrane. The alpha chain is a regulatory subunit. The protein is ATP synthase subunit alpha, chloroplastic of Oryza nivara (Indian wild rice).